The chain runs to 308 residues: Protein translocase subunit SecF (308 aa).

Transmembrane regions (helical) follow at residues 18–38 (AYVF…TRGL), 134–154 (GAIY…LIRF), 160–180 (LGAV…FSLL), 193–213 (TIIA…VVVF), 244–264 (IITS…GGEV), and 272–292 (LIVG…PVVI).

The protein belongs to the SecD/SecF family. SecF subfamily. In terms of assembly, forms a complex with SecD. Part of the essential Sec protein translocation apparatus which comprises SecA, SecYEG and auxiliary proteins SecDF. Other proteins may also be involved.

It is found in the cell inner membrane. Its function is as follows. Part of the Sec protein translocase complex. Interacts with the SecYEG preprotein conducting channel. SecDF uses the proton motive force (PMF) to complete protein translocation after the ATP-dependent function of SecA. This Rhodothermus marinus (strain ATCC 43812 / DSM 4252 / R-10) (Rhodothermus obamensis) protein is Protein translocase subunit SecF.